The following is a 102-amino-acid chain: Altered inheritance of mitochondria protein 4 (102 aa).

Residues 1–38 (MNYINMKKIDEENKANSGDDTTESRKKQKTKNNEEHEI) are disordered.

The protein belongs to the AIM4 family.

The protein resides in the cytoplasm. This Vanderwaltozyma polyspora (strain ATCC 22028 / DSM 70294 / BCRC 21397 / CBS 2163 / NBRC 10782 / NRRL Y-8283 / UCD 57-17) (Kluyveromyces polysporus) protein is Altered inheritance of mitochondria protein 4 (AIM4).